Reading from the N-terminus, the 94-residue chain is Sapecin (94 aa).

A signal peptide spans 1-23; that stretch reads MKSFIVLAVTLCLAAFFMGQSVA. Positions 24 to 54 are excised as a propeptide; it reads SPAAAAEESKFVDGLHALKTIEPELHGRYKR. Disulfide bonds link C57–C84, C70–C90, and C74–C92.

It belongs to the invertebrate defensin family. Type 1 subfamily. As to expression, hemocytes and fat body.

It localises to the secreted. Its function is as follows. Sapecins, which are potent bactericidal proteins, are produced in response to injury. Sapecin is cytotoxic to Gram-positive bacteria, and to a lesser extent against Gram-negative bacteria. This chain is Sapecin, found in Sarcophaga peregrina (Flesh fly).